A 508-amino-acid polypeptide reads, in one-letter code: Photosystem II CP47 reaction center protein (508 aa).

The next 6 membrane-spanning stretches (helical) occupy residues 21 to 36 (SVHIMHTALVAGWAGS), 101 to 115 (IVFSGLCFLAAIWHW), 140 to 156 (GIHLFLSGLACFGFGAF), 203 to 218 (IAAGTLGILAGLFHLS), 237 to 252 (VLSSSIAAVFFAAFVV), and 457 to 472 (SFALLFFFGHIWHGAR).

The protein belongs to the PsbB/PsbC family. PsbB subfamily. As to quaternary structure, PSII is composed of 1 copy each of membrane proteins PsbA, PsbB, PsbC, PsbD, PsbE, PsbF, PsbH, PsbI, PsbJ, PsbK, PsbL, PsbM, PsbT, PsbX, PsbY, PsbZ, Psb30/Ycf12, at least 3 peripheral proteins of the oxygen-evolving complex and a large number of cofactors. It forms dimeric complexes. Requires Binds multiple chlorophylls. PSII binds additional chlorophylls, carotenoids and specific lipids. as cofactor.

The protein localises to the plastid. It is found in the chloroplast thylakoid membrane. In terms of biological role, one of the components of the core complex of photosystem II (PSII). It binds chlorophyll and helps catalyze the primary light-induced photochemical processes of PSII. PSII is a light-driven water:plastoquinone oxidoreductase, using light energy to abstract electrons from H(2)O, generating O(2) and a proton gradient subsequently used for ATP formation. The chain is Photosystem II CP47 reaction center protein from Ipomoea purpurea (Common morning glory).